The primary structure comprises 398 residues: Basic helix-loop-helix neural transcription factor TAP (398 aa).

2 disordered regions span residues 35–59 and 102–144; these read ETEAQLSSRRRLDFGTPPTPAIPQP and RATN…RSRS. Basic residues predominate over residues 127-141; the sequence is RPKRKYAVGKNRVTR. Positions 154 to 206 constitute a bHLH domain; it reads FRRMKANDRERNRMHNLNDALEKLRVTLPSLPEETKLTKIEILRFAHNYIFAL. Disordered stretches follow at residues 265–333 and 361–398; these read AQHQ…QQFS and QQSSFYSQTPPWKDYPEDQAHVHPVPHQHSYKNFAPQV. Residues 307–333 show a composition bias toward low complexity; sequence HQQQQQPHQPHHLQPNPQQESSPQQFS. The span at 361–370 shows a compositional bias: polar residues; sequence QQSSFYSQTP.

In terms of tissue distribution, expressed in neuronal and glial precursors during differentiation. In the peripheral nervous system, expression is exclusively in one of the neurons that innervate each larval chemosensory organ. Expressed at a late stage in the development of one type of adult chemosensory organ, the gustatory bristles of the leg, wing and proboscis. Expressed very early in the development of a second type of chemosensory receptors, the olfactory organs of the antenna.

It localises to the nucleus. May play a role in the specification of the sugar-sensitive adult gustatory neuron and affect the response to sugar and salt. Regulated by POXN. This chain is Basic helix-loop-helix neural transcription factor TAP (tap), found in Drosophila melanogaster (Fruit fly).